Here is a 172-residue protein sequence, read N- to C-terminus: Signal peptidase complex catalytic subunit sec11 (172 aa).

At 1 to 14 (MLSFLQNPRQAAAQ) the chain is on the cytoplasmic side. A helical; Signal-anchor for type II membrane protein transmembrane segment spans residues 15–35 (VLNFALILSTAFMMWKGLSVA). Residues 36 to 172 (SDSPSPIVVV…MGLVVVLQRE (137 aa)) lie on the Lumenal side of the membrane. Active-site charge relay system residues include Ser49, His90, and Asp115. Residues 158–169 (VMLGMMGLVVVL) are C-terminal short (CTS) helix.

Belongs to the peptidase S26B family. As to quaternary structure, component of the signal peptidase complex (SPC) composed of a catalytic subunit SEC11 and three accessory subunits SPC1, SPC2 and SPC3. The complex induces a local thinning of the ER membrane which is used to measure the length of the signal peptide (SP) h-region of protein substrates. This ensures the selectivity of the complex towards h-regions shorter than 18-20 amino acids. SPC associates with the translocon complex.

The protein resides in the endoplasmic reticulum membrane. The enzyme catalyses Cleavage of hydrophobic, N-terminal signal or leader sequences from secreted and periplasmic proteins.. Its function is as follows. Catalytic component of the signal peptidase complex (SPC) which catalyzes the cleavage of N-terminal signal sequences from nascent proteins as they are translocated into the lumen of the endoplasmic reticulum. Specifically cleaves N-terminal signal peptides that contain a hydrophobic alpha-helix (h-region) shorter than 18-20 amino acids. The chain is Signal peptidase complex catalytic subunit sec11 (sec11) from Sclerotinia sclerotiorum (strain ATCC 18683 / 1980 / Ss-1) (White mold).